The primary structure comprises 231 residues: Flagellar L-ring protein (231 aa).

The signal sequence occupies residues 1–18 (MNRLLSLFALGGAVLLAG). C19 carries N-palmitoyl cysteine lipidation. C19 carries S-diacylglycerol cysteine lipidation.

It belongs to the FlgH family. The basal body constitutes a major portion of the flagellar organelle and consists of four rings (L,P,S, and M) mounted on a central rod.

The protein localises to the cell outer membrane. It is found in the bacterial flagellum basal body. Functionally, assembles around the rod to form the L-ring and probably protects the motor/basal body from shearing forces during rotation. This is Flagellar L-ring protein from Pseudomonas putida (strain W619).